Consider the following 387-residue polypeptide: 1,3-propanediol dehydrogenase (387 aa).

It belongs to the iron-containing alcohol dehydrogenase family. Homooctamer. Requires Fe cation as cofactor.

The enzyme catalyses propane-1,3-diol + NAD(+) = 3-hydroxypropanal + NADH + H(+). Inhibited by the metal chelator 1,10-phenanthroline. In terms of biological role, catalyzes the reduction of 3-hydroxypropanal. Is considerably less active with glyceraldehyde, propionaldehyde, acetaldehyde, and butyraldehyde. Also catalyzes the oxidation of various primary, secondary, and tertiary alcohols. Is most active with substrates containing two primary alcohol groups separated by one or two carbon atoms. 1,3-propanediol is the preferred substrate. This chain is 1,3-propanediol dehydrogenase, found in Citrobacter freundii.